The chain runs to 411 residues: ACT domain-containing protein ACR9 (411 aa).

ACT domains lie at V22–K105, L111–P194, and L243–V322.

May bind amino acids. The polypeptide is ACT domain-containing protein ACR9 (Arabidopsis thaliana (Mouse-ear cress)).